The following is a 117-amino-acid chain: MDTETSPLLSHNLSTREGIKQNTQGLLAHTIARHPGITAIILGILILLVIILIIVAIVYYNRSVDCKSNMPRPPPSYSIQQSEPHHHFPVFFRKRKNSTSQQAHIPSDEQLAELVHS.

A glycan (N-linked (GlcNAc...) asparagine; by host) is linked at N12. Residues 39–59 traverse the membrane as a helical segment; it reads AIILGILILLVIILIIVAIVY. N-linked (GlcNAc...) asparagine; by host glycans are attached at residues N61 and N97.

Belongs to the asfivirus minor capsid protein p17 family. In terms of assembly, interacts with the minor capsid protein M1249L and with the hexon capsid protein p72 capsomers; these interactions form a rigid zipper structure that stabilizes the capsomers. Interacts with host STING1.

The protein resides in the virion membrane. Its subcellular location is the host endoplasmic reticulum membrane. In terms of biological role, together with the penton and the other minor capsid proteins (M1249L, p49), forms a complicated network immediately below the outer capsid shell, stabilizing the whole capsid. Three copies of p17 encircle each p72 capsomer in the inner capsid shell, anchoring p72 capsomers on the inner membrane. Required for the assembly of the capsid and icosahedral morphogenesis. Additionally, inhibits the host cGAS-STING pathway through its interaction with STING1 and subsequent interference of the recruitment of downstream components TBK1 and IKBKE. The chain is Minor capsid protein p17 from Ornithodoros (relapsing fever ticks).